An 88-amino-acid chain; its full sequence is Protein transport protein Sec61 subunit beta (88 aa).

The tract at residues 1–41 (MDSSVPGGQRTLQKRRNAQLQKEKKANQTPASPRQAGFGGS) is disordered. Residues 1 to 60 (MDSSVPGGQRTLQKRRNAQLQKEKKANQTPASPRQAGFGGSSSSILKLYTDEANGLRVDP) are Cytoplasmic-facing. A helical membrane pass occupies residues 61-81 (LVVLFLAVAFVFSVVALHVVA).

It belongs to the SEC61-beta family. Heterotrimeric complex composed of SEC61, SEB1 and SSS1.

Its subcellular location is the endoplasmic reticulum membrane. Functionally, necessary for protein translocation in the endoplasmic reticulum. The protein is Protein transport protein Sec61 subunit beta (SBH1) of Kluyveromyces lactis (strain ATCC 8585 / CBS 2359 / DSM 70799 / NBRC 1267 / NRRL Y-1140 / WM37) (Yeast).